Consider the following 387-residue polypeptide: 3-hydroxyisobutyryl-CoA hydrolase-like protein 5 (387 aa).

Residue Ala-2 is modified to N-acetylalanine.

This sequence belongs to the enoyl-CoA hydratase/isomerase family.

This is 3-hydroxyisobutyryl-CoA hydrolase-like protein 5 from Arabidopsis thaliana (Mouse-ear cress).